We begin with the raw amino-acid sequence, 993 residues long: Glycogen phosphorylase 2 (993 aa).

Residues 1-82 (MEEKRSTNSP…SNQSEDPATQ (82 aa)) are disordered. Residues 19-48 (RSGSITSATSHPPRSNSNPKLVAKHQQQLY) are compositionally biased toward polar residues. Low complexity predominate over residues 58–77 (EQQNQQPQQQQQKQTSNQSE). Lys763 is modified (N6-(pyridoxal phosphate)lysine). Polar residues predominate over residues 962–981 (VISGGDKTNNTLKPKQTTKG). Positions 962 to 993 (VISGGDKTNNTLKPKQTTKGFNIGGQPGNPTN) are disordered. The span at 983–993 (NIGGQPGNPTN) shows a compositional bias: gly residues.

This sequence belongs to the glycogen phosphorylase family. As to quaternary structure, homodimer. Pyridoxal 5'-phosphate serves as cofactor. In terms of processing, the N-terminus is blocked. Post-translationally, enzyme activity requires processing of the 113 kDa peptide to an enzymatically active 106 kDa form of the protein. Processing would occur near the middle of the Gln-rich repetitive element.

It catalyses the reaction [(1-&gt;4)-alpha-D-glucosyl](n) + phosphate = [(1-&gt;4)-alpha-D-glucosyl](n-1) + alpha-D-glucose 1-phosphate. In terms of biological role, phosphorylase is an important allosteric enzyme in carbohydrate metabolism. Enzymes from different sources differ in their regulatory mechanisms and in their natural substrates. However, all known phosphorylases share catalytic and structural properties. This is Glycogen phosphorylase 2 (glpD) from Dictyostelium discoideum (Social amoeba).